The chain runs to 375 residues: 23S rRNA (uracil(747)-C(5))-methyltransferase RlmC (375 aa).

Residues Cys-3, Cys-11, Cys-14, and Cys-87 each contribute to the [4Fe-4S] cluster site. S-adenosyl-L-methionine-binding residues include Gln-212, Phe-241, Glu-262, and Asn-307. Cys-334 (nucleophile) is an active-site residue.

This sequence belongs to the class I-like SAM-binding methyltransferase superfamily. RNA M5U methyltransferase family. RlmC subfamily.

It carries out the reaction uridine(747) in 23S rRNA + S-adenosyl-L-methionine = 5-methyluridine(747) in 23S rRNA + S-adenosyl-L-homocysteine + H(+). Functionally, catalyzes the formation of 5-methyl-uridine at position 747 (m5U747) in 23S rRNA. In Escherichia coli (strain SMS-3-5 / SECEC), this protein is 23S rRNA (uracil(747)-C(5))-methyltransferase RlmC.